The sequence spans 455 residues: UDP-N-acetylmuramoylalanine--D-glutamate ligase (455 aa).

119–125 (GTNGKTT) contacts ATP.

The protein belongs to the MurCDEF family.

It localises to the cytoplasm. It carries out the reaction UDP-N-acetyl-alpha-D-muramoyl-L-alanine + D-glutamate + ATP = UDP-N-acetyl-alpha-D-muramoyl-L-alanyl-D-glutamate + ADP + phosphate + H(+). The protein operates within cell wall biogenesis; peptidoglycan biosynthesis. Cell wall formation. Catalyzes the addition of glutamate to the nucleotide precursor UDP-N-acetylmuramoyl-L-alanine (UMA). This Listeria innocua serovar 6a (strain ATCC BAA-680 / CLIP 11262) protein is UDP-N-acetylmuramoylalanine--D-glutamate ligase.